The chain runs to 94 residues: Large ribosomal subunit protein uL23 (94 aa).

The protein belongs to the universal ribosomal protein uL23 family. Part of the 50S ribosomal subunit. Contacts protein L29, and trigger factor when it is bound to the ribosome.

Its function is as follows. One of the early assembly proteins it binds 23S rRNA. One of the proteins that surrounds the polypeptide exit tunnel on the outside of the ribosome. Forms the main docking site for trigger factor binding to the ribosome. In Listeria innocua serovar 6a (strain ATCC BAA-680 / CLIP 11262), this protein is Large ribosomal subunit protein uL23.